Reading from the N-terminus, the 185-residue chain is Large ribosomal subunit protein uL5 (185 aa).

This sequence belongs to the universal ribosomal protein uL5 family. In terms of assembly, part of the 50S ribosomal subunit; part of the 5S rRNA/L5/L18/L25 subcomplex. Contacts the 5S rRNA and the P site tRNA. Forms a bridge to the 30S subunit in the 70S ribosome.

Functionally, this is one of the proteins that bind and probably mediate the attachment of the 5S RNA into the large ribosomal subunit, where it forms part of the central protuberance. In the 70S ribosome it contacts protein S13 of the 30S subunit (bridge B1b), connecting the 2 subunits; this bridge is implicated in subunit movement. Contacts the P site tRNA; the 5S rRNA and some of its associated proteins might help stabilize positioning of ribosome-bound tRNAs. This chain is Large ribosomal subunit protein uL5, found in Bartonella tribocorum (strain CIP 105476 / IBS 506).